A 210-amino-acid polypeptide reads, in one-letter code: LexA repressor (210 aa).

Positions 30-50 form a DNA-binding region, H-T-H motif; the sequence is RVEIAREIGFKSPNAAEEHLK. Catalysis depends on for autocatalytic cleavage activity residues serine 127 and lysine 164.

Belongs to the peptidase S24 family. In terms of assembly, homodimer.

It catalyses the reaction Hydrolysis of Ala-|-Gly bond in repressor LexA.. In terms of biological role, represses a number of genes involved in the response to DNA damage (SOS response), including recA and lexA. In the presence of single-stranded DNA, RecA interacts with LexA causing an autocatalytic cleavage which disrupts the DNA-binding part of LexA, leading to derepression of the SOS regulon and eventually DNA repair. In Actinobacillus pleuropneumoniae serotype 7 (strain AP76), this protein is LexA repressor.